The sequence spans 89 residues: Small ribosomal subunit protein uS15 (89 aa).

The tract at residues 1–23 (MSLDTTEKQQLINANQTHGTDTG) is disordered. Polar residues predominate over residues 8-23 (KQQLINANQTHGTDTG).

It belongs to the universal ribosomal protein uS15 family. In terms of assembly, part of the 30S ribosomal subunit. Forms a bridge to the 50S subunit in the 70S ribosome, contacting the 23S rRNA.

Functionally, one of the primary rRNA binding proteins, it binds directly to 16S rRNA where it helps nucleate assembly of the platform of the 30S subunit by binding and bridging several RNA helices of the 16S rRNA. Forms an intersubunit bridge (bridge B4) with the 23S rRNA of the 50S subunit in the ribosome. This is Small ribosomal subunit protein uS15 from Prochlorococcus marinus (strain MIT 9313).